A 542-amino-acid polypeptide reads, in one-letter code: Quinidine resistance protein 2 (542 aa).

Topologically, residues 1–67 (MAGATSSIIR…SFKTVLIAQC (67 aa)) are cytoplasmic. S21 is subject to Phosphoserine. The residue at position 38 (T38) is a Phosphothreonine. Position 40 is a phosphoserine (S40). A helical transmembrane segment spans residues 68–88 (AFTGFFSTIAGAIYYPVLSVI). At 89-100 (ERKFDIDEELVN) the chain is on the extracellular side. A helical transmembrane segment spans residues 101–121 (VTVVVYFVFQGLAPTFMGGFA). Topologically, residues 122–127 (DSLGRR) are cytoplasmic. The helical transmembrane segment at 128 to 148 (PVVLVAIVIYFGACIGLACAQ) threads the bilayer. T149 is a topological domain (extracellular). A helical transmembrane segment spans residues 150–170 (YAQIIVLRCLQAAGISPVIAI). The Cytoplasmic segment spans residues 171-187 (NSGIMGDVTTRAERGGY). The chain crosses the membrane as a helical span at residues 188–208 (VGYVAGFQVLGSAFGALIGAG). The Extracellular portion of the chain corresponds to 209-216 (LSSRWGWR). Residues 217 to 237 (AIFWFLAIGSGICFLASFLIL) form a helical membrane-spanning segment. At 238-300 (PETKRNISGN…APFKILKAYE (63 aa)) the chain is on the cytoplasmic side. Residues 301-321 (ICILMLVAGLQFAMYTTHLTA) traverse the membrane as a helical segment. Over 322–333 (LSTALSKQYHLT) the chain is Extracellular. Residues 334–354 (VAKVGLCYLPSGICTLCSIVI) form a helical membrane-spanning segment. Over 355–413 (AGRYLNWNYRRRLKYYQNWLGKKRSKLLEEHDNDLNLVQRIIENDPKYTFNIFKARLQP) the chain is Cytoplasmic. A helical membrane pass occupies residues 414–434 (AFVTLLLSSSGFCAYGWCITV). The Extracellular portion of the chain corresponds to 435 to 437 (KAP). A helical membrane pass occupies residues 438–458 (LAAVLCMSGFASLFSNCILTF). Over 459-472 (STTLIVDLFPTKTS) the chain is Cytoplasmic. A helical membrane pass occupies residues 473-493 (TATGCLNLFRCILSAVFIAAL). The Extracellular segment spans residues 494-503 (SKMVEKMKFG). A helical membrane pass occupies residues 504–524 (GVFTFLGALTSSSSILLFILL). At 525-542 (RKGKELAFKRKKQELGVN) the chain is on the cytoplasmic side.

Belongs to the major facilitator superfamily. CAR1 family.

Its subcellular location is the cell membrane. Functionally, multidrug resistance transporter involved in resistance and adaptation to quinidine and to the herbicide barban (4-chloro-2-butynyl [3-chlorophenyl] carbamate). Implicated in potassium uptake. This is Quinidine resistance protein 2 (QDR2) from Saccharomyces cerevisiae (strain ATCC 204508 / S288c) (Baker's yeast).